The sequence spans 205 residues: Small ribosomal subunit protein uS4 (205 aa).

The interval 26–46 (PVNRREYGPGQHGQRRKQKPS) is disordered. Positions 94–157 (RRLDAVVYRL…KQLAIVLDAV (64 aa)) constitute an S4 RNA-binding domain.

This sequence belongs to the universal ribosomal protein uS4 family. As to quaternary structure, part of the 30S ribosomal subunit. Contacts protein S5. The interaction surface between S4 and S5 is involved in control of translational fidelity.

Functionally, one of the primary rRNA binding proteins, it binds directly to 16S rRNA where it nucleates assembly of the body of the 30S subunit. With S5 and S12 plays an important role in translational accuracy. The polypeptide is Small ribosomal subunit protein uS4 (Gluconobacter oxydans (strain 621H) (Gluconobacter suboxydans)).